A 648-amino-acid chain; its full sequence is Pesticidal crystal protein Cry19Aa (648 aa).

Belongs to the delta endotoxin family.

In terms of biological role, promotes colloidosmotic lysis by binding to the midgut epithelial cells of mosquitos. This chain is Pesticidal crystal protein Cry19Aa (cry19Aa), found in Bacillus thuringiensis subsp. jegathesan.